The primary structure comprises 463 residues: Argininosuccinate lyase (463 aa).

Belongs to the lyase 1 family. Argininosuccinate lyase subfamily.

The protein localises to the cytoplasm. The enzyme catalyses 2-(N(omega)-L-arginino)succinate = fumarate + L-arginine. It participates in amino-acid biosynthesis; L-arginine biosynthesis; L-arginine from L-ornithine and carbamoyl phosphate: step 3/3. This chain is Argininosuccinate lyase, found in Bacillus cereus (strain AH187).